Here is a 1201-residue protein sequence, read N- to C-terminus: DNA-directed RNA polymerase subunit beta' (1201 aa).

Positions 60, 62, 75, and 78 each coordinate Zn(2+). Asp449, Asp451, and Asp453 together coordinate Mg(2+). 4 residues coordinate Zn(2+): Cys818, Cys892, Cys899, and Cys902.

It belongs to the RNA polymerase beta' chain family. In terms of assembly, the RNAP catalytic core consists of 2 alpha, 1 beta, 1 beta' and 1 omega subunit. When a sigma factor is associated with the core the holoenzyme is formed, which can initiate transcription. Mg(2+) is required as a cofactor. It depends on Zn(2+) as a cofactor.

It carries out the reaction RNA(n) + a ribonucleoside 5'-triphosphate = RNA(n+1) + diphosphate. Its function is as follows. DNA-dependent RNA polymerase catalyzes the transcription of DNA into RNA using the four ribonucleoside triphosphates as substrates. The sequence is that of DNA-directed RNA polymerase subunit beta' from Listeria monocytogenes serovar 1/2a (strain ATCC BAA-679 / EGD-e).